We begin with the raw amino-acid sequence, 263 residues long: Urease accessory protein UreD 1 (263 aa).

This sequence belongs to the UreD family. In terms of assembly, ureD, UreF and UreG form a complex that acts as a GTP-hydrolysis-dependent molecular chaperone, activating the urease apoprotein by helping to assemble the nickel containing metallocenter of UreC. The UreE protein probably delivers the nickel.

It localises to the cytoplasm. Its function is as follows. Required for maturation of urease via the functional incorporation of the urease nickel metallocenter. This chain is Urease accessory protein UreD 1, found in Synechococcus sp. (strain JA-3-3Ab) (Cyanobacteria bacterium Yellowstone A-Prime).